A 238-amino-acid polypeptide reads, in one-letter code: Transmembrane protein 127 (238 aa).

The residue at position 1 (methionine 1) is an N-acetylmethionine. Gly residues predominate over residues 1–11 (MYAPGGAGLPG). Residues 1 to 27 (MYAPGGAGLPGGRRRRSPGGSALPKQP) form a disordered region. Position 17 is a phosphoserine (serine 17). 3 helical membrane passes run 96-116 (IAAF…LDVF), 130-150 (AFAH…SYWA), and 169-189 (VYVT…ASIL).

It belongs to the TMEM127 family. As to expression, widely expressed.

Its subcellular location is the cell membrane. The protein localises to the cytoplasm. Its function is as follows. Controls cell proliferation acting as a negative regulator of TOR signaling pathway mediated by mTORC1. May act as a tumor suppressor. This chain is Transmembrane protein 127 (TMEM127), found in Homo sapiens (Human).